A 165-amino-acid chain; its full sequence is Transcriptional repressor NrdR (165 aa).

Residues 3–34 fold into a zinc finger; that stretch reads CPFCRHPDSRVVDSREADEGQAIRRRRSCPEC. Positions 46–136 constitute an ATP-cone domain; that stretch reads LSVVKRSGVT…VYKSFSSAAD (91 aa).

This sequence belongs to the NrdR family. Zn(2+) is required as a cofactor.

Functionally, negatively regulates transcription of bacterial ribonucleotide reductase nrd genes and operons by binding to NrdR-boxes. This chain is Transcriptional repressor NrdR, found in Rhodococcus erythropolis (strain PR4 / NBRC 100887).